Here is a 124-residue protein sequence, read N- to C-terminus: Small ribosomal subunit protein bS6 (124 aa).

The protein belongs to the bacterial ribosomal protein bS6 family.

Functionally, binds together with bS18 to 16S ribosomal RNA. This chain is Small ribosomal subunit protein bS6, found in Actinobacillus pleuropneumoniae serotype 5b (strain L20).